A 988-amino-acid chain; its full sequence is Kinesin-like protein CIN8 (988 aa).

The Kinesin motor domain maps to 33–470; that stretch reads NILVAVRCRG…LEYASKAKNI (438 aa). 125–132 lines the ATP pocket; it reads GMTSTGKT. The segment at 206-301 is disordered; it reads FDSNVNGTSA…NSNNTNQQQS (96 aa). A compositionally biased stretch (low complexity) spans 208–237; it reads SNVNGTSASGSSSRSSSRNNSPRSAPDNSR. Residues 248 to 280 show a composition bias toward polar residues; sequence HNTTGNSKISNNNHNKFSRFKQTSQESTRAHAS. Residues 281–301 are compositionally biased toward low complexity; it reads NNHQNVHIPNNNSNNTNQQQS. 2 coiled-coil regions span residues 514–619 and 707–769; these read EHYK…ELQQ and KLAE…MQNF. A compositionally biased stretch (basic and acidic residues) spans 965-974; the sequence is ALQEKRKPED. A disordered region spans residues 965-988; it reads ALQEKRKPEDEVLLQAKLQRRNPD.

It belongs to the TRAFAC class myosin-kinesin ATPase superfamily. Kinesin family. BimC subfamily.

Its subcellular location is the cytoplasm. It is found in the cytoskeleton. It localises to the spindle. Elongates the mitotic spindle by interacting with spindle microtubules to generate an outward force pushing spindle poles apart. Following spindle assembly, CIN8 and KIP1 apparently act to oppose a force, possibly generated by KAR3, that draws separated poles back together. In Candida glabrata (strain ATCC 2001 / BCRC 20586 / JCM 3761 / NBRC 0622 / NRRL Y-65 / CBS 138) (Yeast), this protein is Kinesin-like protein CIN8 (CIN8).